We begin with the raw amino-acid sequence, 496 residues long: MYKTKIICLLLGILSGLVFAPIFFIPALFTFSYLCYIVQKSQNWQVAAKFGYLFGFGHFLSGMYWISIGVSVYIADFWWAIPFALFGLPIILAFFISANCTLSFFAKNNKYYQLIFCLLWVLFEWIRSWILTGLPWNLIGYAFSFSEILIQPLSITGIYGLSFIVIYISTSAYPVFTKKFTQLKILLASSMLILTVMVIYGAVRVSTNPTNFTDIKVRLVQPSIPQTAKWDQEEFWHNLMLHINLSENLEPTDLIIWSEAALVVPDDIPQVKLKLLNMLNSTNAILITGGISDNKKHGDQFELYSAMYALDKNNNKLFEYHKSHLVPFGEYMPLKNILPFKKLTHGLIDYKEGDGGLVYIKKYHLKIKPLICYESIFPNFVRTNNEIVDVIINITNDAWYGKSSGPYQHFHISRSRAVENGLPMIRVANNGISAIVDPIGRIVKKLNLNEINYIQGLIPQKLTTPTIFSQFGNFAMLLSIVFIILIHYLLSLIFDE.

6 consecutive transmembrane segments (helical) span residues 6–26, 50–70, 77–97, 114–134, 148–168, and 183–203; these read IICL…FFIP, FGYL…SIGV, FWWA…FFIS, LIFC…LTGL, ILIQ…VIYI, and LKIL…YGAV. The region spanning 220–464 is the CN hydrolase domain; it reads VQPSIPQTAK…QGLIPQKLTT (245 aa). Glu-259 functions as the Proton acceptor in the catalytic mechanism. Lys-322 is an active-site residue. Cys-372 (nucleophile) is an active-site residue. Residues 474-494 traverse the membrane as a helical segment; it reads FAMLLSIVFIILIHYLLSLIF.

The protein belongs to the CN hydrolase family. Apolipoprotein N-acyltransferase subfamily.

It is found in the cell inner membrane. The enzyme catalyses N-terminal S-1,2-diacyl-sn-glyceryl-L-cysteinyl-[lipoprotein] + a glycerophospholipid = N-acyl-S-1,2-diacyl-sn-glyceryl-L-cysteinyl-[lipoprotein] + a 2-acyl-sn-glycero-3-phospholipid + H(+). It functions in the pathway protein modification; lipoprotein biosynthesis (N-acyl transfer). Functionally, catalyzes the phospholipid dependent N-acylation of the N-terminal cysteine of apolipoprotein, the last step in lipoprotein maturation. This is Apolipoprotein N-acyltransferase from Rickettsia prowazekii (strain Madrid E).